The following is a 323-amino-acid chain: Methionyl-tRNA formyltransferase (323 aa).

Residue 115-118 (SLLP) coordinates (6S)-5,6,7,8-tetrahydrofolate.

This sequence belongs to the Fmt family.

It carries out the reaction L-methionyl-tRNA(fMet) + (6R)-10-formyltetrahydrofolate = N-formyl-L-methionyl-tRNA(fMet) + (6S)-5,6,7,8-tetrahydrofolate + H(+). Attaches a formyl group to the free amino group of methionyl-tRNA(fMet). The formyl group appears to play a dual role in the initiator identity of N-formylmethionyl-tRNA by promoting its recognition by IF2 and preventing the misappropriation of this tRNA by the elongation apparatus. The polypeptide is Methionyl-tRNA formyltransferase (Blochmanniella floridana).